A 746-amino-acid polypeptide reads, in one-letter code: Actin filament-associated protein 1-like 1 (746 aa).

The segment at 88–206 (EDQKKEPEAN…RLTHQWPSEE (119 aa)) is disordered. A compositionally biased stretch (polar residues) spans 98-107 (HTVTKPSKTD). The span at 108–119 (SPPPLPNTPPPE) shows a compositional bias: pro residues. The span at 139–148 (SRSSSSPPNS) shows a compositional bias: low complexity. Residues 214–310 (DCHICAFLLR…WLHVVRDVTG (97 aa)) form the PH 1 domain. A disordered region spans residues 336 to 371 (EKQTSDSDSMPSGESARDIRENGKPKRGALSELTGT). Basic and acidic residues predominate over residues 350–359 (SARDIRENGK). The PH 2 domain maps to 406 to 497 (RCGYVGVLVN…WLGVLLAETG (92 aa)). Disordered stretches follow at residues 539-596 (EVPF…TRAQ) and 723-746 (PSIY…KKGT). The segment covering 562 to 575 (SFSSSDTGKPSPQI) has biased composition (polar residues). The stretch at 591–682 (GKTRAQEDAR…VKENLKKSLA (92 aa)) forms a coiled coil. Over residues 736–746 (KAKEWESKKGT) the composition is skewed to basic and acidic residues.

It is found in the cytoplasm. It localises to the cell projection. The protein localises to the podosome. The protein resides in the invadopodium. Its subcellular location is the cytoskeleton. It is found in the stress fiber. May be involved in podosome and invadosome formation. The protein is Actin filament-associated protein 1-like 1 (afap1l1) of Danio rerio (Zebrafish).